A 997-amino-acid chain; its full sequence is Kinesin-like protein KIF19 (997 aa).

The Kinesin motor domain occupies 11–346 (QLTVALRIRP…LTYADRAKNI (336 aa)). 104–111 (GPTGCGKT) lines the ATP pocket. Residues 360–437 (HIAQYTSIIS…REQMDIRRQL (78 aa)) are a coiled coil. The segment covering 468–491 (RARKWRDEHRKETYGKDDSEKDSD) has biased composition (basic and acidic residues). The segment at 468-503 (RARKWRDEHRKETYGKDDSEKDSDTGDDQSDFIEPP) is disordered. A coiled-coil region spans residues 508-577 (ARETIQILEG…ELEIENTEMQ (70 aa)). Disordered stretches follow at residues 662-690 (NLTA…RNPI), 792-811 (GDRL…SMSE), and 848-890 (GGGS…SRSF). Composition is skewed to basic and acidic residues over residues 792-802 (GDRLQPMKERS) and 869-880 (QKLEKREESLEV). Residues 861-889 (HRTQKKQAQKLEKREESLEVKRRKKRSRS) adopt a coiled-coil conformation.

It belongs to the TRAFAC class myosin-kinesin ATPase superfamily. Kinesin family.

The protein resides in the cytoplasm. It localises to the cytoskeleton. It is found in the cell projection. The protein localises to the cilium. Its function is as follows. Plus end-directed microtubule-dependent motor protein that regulates the length of motile cilia by mediating depolymerization of microtubules at ciliary tips. This Xenopus laevis (African clawed frog) protein is Kinesin-like protein KIF19 (kif19).